A 115-amino-acid chain; its full sequence is Cyclin-dependent protein kinase inhibitor SMR3 (115 aa).

A compositionally biased stretch (basic and acidic residues) spans 17–36 (KIRLPTRPELDIPDSDHEDP). Residues 17 to 82 (KIRLPTRPEL…RSSGTKRKLT (66 aa)) form a disordered region. Over residues 67–81 (RKPKPNRSSGTKRKL) the composition is skewed to basic residues.

In terms of assembly, interacts with CDKA-1 and D-type cyclins. As to expression, expressed at low levels in roots and stems.

The protein localises to the nucleus. Probable cyclin-dependent protein kinase (CDK) inhibitor that functions as a repressor of mitosis in the endoreduplication cell cycle. The chain is Cyclin-dependent protein kinase inhibitor SMR3 from Arabidopsis thaliana (Mouse-ear cress).